The chain runs to 61 residues: Acetylcholinesterase toxin C (61 aa).

4 disulfides stabilise this stretch: C3–C22, C17–C39, C41–C52, and C53–C59.

It belongs to the three-finger toxin family. Short-chain subfamily. Acn-esterase inhibitor sub-subfamily. In terms of tissue distribution, expressed by the venom gland.

It is found in the secreted. Its function is as follows. Inhibits acetylcholinesterase. This Dendroaspis polylepis polylepis (Black mamba) protein is Acetylcholinesterase toxin C.